We begin with the raw amino-acid sequence, 105 residues long: MASTFAIGLGVATAAFLGRAGYVALRRYQGGINAMGKAFYKGGFEPRMTRREAALILELPERTLNKEKVRKKHRQLMLLNHPDRGGSPYLATKINEAKEFLDKHI.

Topologically, residues 1-3 (MAS) are mitochondrial intermembrane. Residues 4–23 (TFAIGLGVATAAFLGRAGYV) traverse the membrane as a helical segment. Over 24–105 (ALRRYQGGIN…EAKEFLDKHI (82 aa)) the chain is Mitochondrial matrix. In terms of domain architecture, J spans 52–105 (EAALILELPERTLNKEKVRKKHRQLMLLNHPDRGGSPYLATKINEAKEFLDKHI).

This sequence belongs to the TIM14 family. Heterodimer with PAM18/pamR. Component of the PAM complex, at least composed of mtHsp70, MGE1/mgeA, tim44, PAM16/pamP, PAM17/pamQ and PAM18/pamR.

It is found in the mitochondrion inner membrane. Functionally, essential component of the PAM complex, a complex required for the translocation of transit peptide-containing proteins from the inner membrane into the mitochondrial matrix in an ATP-dependent manner. In the complex, it is required to stimulate activity of mtHSP70 (SSC1/sscA). The chain is Mitochondrial import inner membrane translocase subunit tim14 (pam18) from Aspergillus fumigatus (strain ATCC MYA-4609 / CBS 101355 / FGSC A1100 / Af293) (Neosartorya fumigata).